Consider the following 385-residue polypeptide: Trehalose-phosphate phosphatase A (385 aa).

Positions Met1–Ser21 are disordered.

This sequence belongs to the trehalose phosphatase family. Requires a divalent metal cation as cofactor. In terms of tissue distribution, expressed in flowers.

It carries out the reaction alpha,alpha-trehalose 6-phosphate + H2O = alpha,alpha-trehalose + phosphate. It functions in the pathway glycan biosynthesis; trehalose biosynthesis. Functionally, removes the phosphate from trehalose 6-phosphate to produce free trehalose. Trehalose accumulation in plant may improve abiotic stress tolerance. In Arabidopsis thaliana (Mouse-ear cress), this protein is Trehalose-phosphate phosphatase A (TPPA).